The chain runs to 354 residues: Methionine import ATP-binding protein MetN (354 aa).

Residues 8 to 250 (LDHIDITFRQ…PKEALTQEFI (243 aa)) form the ABC transporter domain. 42–49 (GYSGAGKS) contributes to the ATP binding site.

The protein belongs to the ABC transporter superfamily. Methionine importer (TC 3.A.1.24) family. The complex is composed of two ATP-binding proteins (MetN), two transmembrane proteins (MetI) and a solute-binding protein (MetQ).

It localises to the cell membrane. The enzyme catalyses L-methionine(out) + ATP + H2O = L-methionine(in) + ADP + phosphate + H(+). It carries out the reaction D-methionine(out) + ATP + H2O = D-methionine(in) + ADP + phosphate + H(+). Part of the ABC transporter complex MetNIQ involved in methionine import. Responsible for energy coupling to the transport system. This chain is Methionine import ATP-binding protein MetN, found in Streptococcus pyogenes serotype M2 (strain MGAS10270).